The primary structure comprises 169 residues: Lipoprotein signal peptidase (169 aa).

The next 4 membrane-spanning stretches (helical) occupy residues leucine 10 to phenylalanine 30, isoleucine 40 to serine 60, tryptophan 68 to leucine 88, and glycine 94 to tyrosine 114. Catalysis depends on residues aspartate 124 and aspartate 143. The chain crosses the membrane as a helical span at residues tyrosine 135–leucine 155.

This sequence belongs to the peptidase A8 family.

It localises to the cell inner membrane. The catalysed reaction is Release of signal peptides from bacterial membrane prolipoproteins. Hydrolyzes -Xaa-Yaa-Zaa-|-(S,diacylglyceryl)Cys-, in which Xaa is hydrophobic (preferably Leu), and Yaa (Ala or Ser) and Zaa (Gly or Ala) have small, neutral side chains.. It functions in the pathway protein modification; lipoprotein biosynthesis (signal peptide cleavage). Functionally, this protein specifically catalyzes the removal of signal peptides from prolipoproteins. The polypeptide is Lipoprotein signal peptidase (Pseudomonas aeruginosa (strain UCBPP-PA14)).